Reading from the N-terminus, the 234-residue chain is Probable transcriptional regulatory protein Psyr_3028 (234 aa).

It belongs to the TACO1 family.

The protein localises to the cytoplasm. The protein is Probable transcriptional regulatory protein Psyr_3028 of Pseudomonas syringae pv. syringae (strain B728a).